The chain runs to 471 residues: Coronin-6 (471 aa).

5 WD repeats span residues 79–119 (GHTG…PVRN), 129–169 (GHSK…VLLS), 173–212 (IHPD…VVAE), 216–259 (PHEG…EPVA), and 264–304 (DTSN…PFVH). A disordered region spans residues 410–433 (ILDVRPPASPRRSQSASEAPLSQH). The segment covering 419 to 429 (PRRSQSASEAP) has biased composition (low complexity). Residues 426–468 (SEAPLSQHTLETLLEEIKALRDRVQAQEERITALENMLCELVD) adopt a coiled-coil conformation.

The protein is Coronin-6 (Coro6) of Mus musculus (Mouse).